The primary structure comprises 171 residues: S-ribosylhomocysteine lyase (171 aa).

Residues His-54, His-58, and Cys-128 each coordinate Fe cation.

It belongs to the LuxS family. In terms of assembly, homodimer. Requires Fe cation as cofactor.

The catalysed reaction is S-(5-deoxy-D-ribos-5-yl)-L-homocysteine = (S)-4,5-dihydroxypentane-2,3-dione + L-homocysteine. Functionally, involved in the synthesis of autoinducer 2 (AI-2) which is secreted by bacteria and is used to communicate both the cell density and the metabolic potential of the environment. The regulation of gene expression in response to changes in cell density is called quorum sensing. Catalyzes the transformation of S-ribosylhomocysteine (RHC) to homocysteine (HC) and 4,5-dihydroxy-2,3-pentadione (DPD). The polypeptide is S-ribosylhomocysteine lyase (Escherichia fergusonii (strain ATCC 35469 / DSM 13698 / CCUG 18766 / IAM 14443 / JCM 21226 / LMG 7866 / NBRC 102419 / NCTC 12128 / CDC 0568-73)).